The chain runs to 544 residues: Putative pentatricopeptide repeat-containing protein At5g59200, chloroplastic (544 aa).

The interval 1–21 (MISSLAAITGGPSTFRRDPDS) is disordered. Residues 1–25 (MISSLAAITGGPSTFRRDPDSNTLR) constitute a chloroplast transit peptide. PPR repeat units lie at residues 60–90 (DAFVVFELIRVCSTLDSVDYAYDVFSYVSNP), 91–125 (NVYLYTAMIDGFVSSGRSADGVSLYHRMIHNSVLP), 127–156 (NYVITSVLKACDLKVCREIHAQVLKLGFGS), 157–187 (SRSVGLKMMEIYGKSGELVNAKKMFDEMPDR), 188–218 (DHVAATVMINCYSECGFIKEALELFQDVKIK), 219–253 (DTVCWTAMIDGLVRNKEMNKALELFREMQMENVSA), 254–288 (NEFTAVCVLSACSDLGALELGRWVHSFVENQRMEL), 289–319 (SNFVGNALINMYSRCGDINEARRVFRVMRDK), 320–354 (DVISYNTMISGLAMHGASVEAINEFRDMVNRGFRP), 355–385 (NQVTLVALLNACSHGGLLDIGLEVFNSMKRV), and 391–421 (QIEHYGCIVDLLGRVGRLEEAYRFIENIPIE). The type E motif stretch occupies residues 426–501 (MLGTLLSACK…EPGCSTIEVD (76 aa)). Residues 502–532 (NQIHEFLVGDIAHPHKEAIYQRLQELNRILR) form a type E(+) motif region.

Belongs to the PPR family. PCMP-E subfamily.

Its subcellular location is the plastid. It localises to the chloroplast. Involved in RNA editing event in chloroplasts. Required for the editing of a single site in rpl23 transcript. The chain is Putative pentatricopeptide repeat-containing protein At5g59200, chloroplastic (PCMP-E41) from Arabidopsis thaliana (Mouse-ear cress).